The sequence spans 197 residues: Holliday junction branch migration complex subunit RuvA (197 aa).

The segment at 1 to 61 (MYEYFEGTIT…ENGMTLYGFK (61 aa)) is domain I. The segment at 62–140 (SQQDKVLFNK…NYVAENLFTE (79 aa)) is domain II. The interval 141-150 (DEPVESVFPA) is flexible linker. The tract at residues 150–197 (ALEDALLALGALGYSQKEVDRIKPKLKKLPEMSADEYIKQGLGFLLKK) is domain III.

This sequence belongs to the RuvA family. As to quaternary structure, homotetramer. Forms an RuvA(8)-RuvB(12)-Holliday junction (HJ) complex. HJ DNA is sandwiched between 2 RuvA tetramers; dsDNA enters through RuvA and exits via RuvB. An RuvB hexamer assembles on each DNA strand where it exits the tetramer. Each RuvB hexamer is contacted by two RuvA subunits (via domain III) on 2 adjacent RuvB subunits; this complex drives branch migration. In the full resolvosome a probable DNA-RuvA(4)-RuvB(12)-RuvC(2) complex forms which resolves the HJ.

It is found in the cytoplasm. In terms of biological role, the RuvA-RuvB-RuvC complex processes Holliday junction (HJ) DNA during genetic recombination and DNA repair, while the RuvA-RuvB complex plays an important role in the rescue of blocked DNA replication forks via replication fork reversal (RFR). RuvA specifically binds to HJ cruciform DNA, conferring on it an open structure. The RuvB hexamer acts as an ATP-dependent pump, pulling dsDNA into and through the RuvAB complex. HJ branch migration allows RuvC to scan DNA until it finds its consensus sequence, where it cleaves and resolves the cruciform DNA. The polypeptide is Holliday junction branch migration complex subunit RuvA (Lactobacillus delbrueckii subsp. bulgaricus (strain ATCC BAA-365 / Lb-18)).